We begin with the raw amino-acid sequence, 391 residues long: Testis-expressed protein 9 (391 aa).

Disordered stretches follow at residues 1-31 (MAGR…PGPD) and 65-85 (QEVR…EDDY). A coiled-coil region spans residues 188–351 (IGTEAQIRFL…EKQKGELMIG (164 aa)).

It localises to the cytoplasm. Its subcellular location is the cytoskeleton. It is found in the microtubule organizing center. The protein localises to the centrosome. The protein resides in the centriolar satellite. This is Testis-expressed protein 9 (TEX9) from Homo sapiens (Human).